Reading from the N-terminus, the 548-residue chain is MAAKDVKFGNDARVKMLRGVNVLADAVKVTLGPKGRNVVLDKSFGAPTITKDGVSVAREIELEDKFENMGAQMVKEVASKANDAAGDGTTTATVLAQAIVNEGLKAVAAGMNPMDLKRGIDKAVIAAVEELKALSVPCSDSKAIAQVGTISANSDETVGKLIAEAMDKVGKEGVITVEDGTGLEDELDVVEGMQFDRGYLSPYFINKPDTGAVELESPFILLADKKISNIREMLPVLEAVAKAGKPLVIIAEDVEGEALATLVVNTMRGIVKVAAVKAPGFGDRRKAMLQDIATLTGGTVISEEIGMELEKATLEDLGQAKRVVINKDTTTIIDGVGEESAIQGRVAQIRKQIEEATSDYDREKLQERVAKLAGGVAVIKVGAATEVEMKEKKARVDDALHATRAAVEEGVVAGGGVALVRVAAKLAGLTGQNEDQNVGIKVALRAMEAPLRQIVSNAGEEPSVVANNVKAGDGNYGYNAATEEYGNMIDFGILDPTKVTRSALQYAASVAGLMITTECMVTDLPKGDAPDLGAAGGMGGMGGMGGMM.

Residues 30-33 (TLGP), Lys51, 87-91 (DGTTT), Gly415, 479-481 (NAA), and Asp495 each bind ATP.

This sequence belongs to the chaperonin (HSP60) family. In terms of assembly, forms a cylinder of 14 subunits composed of two heptameric rings stacked back-to-back. Interacts with the co-chaperonin GroES.

The protein localises to the cytoplasm. It carries out the reaction ATP + H2O + a folded polypeptide = ADP + phosphate + an unfolded polypeptide.. Its function is as follows. Together with its co-chaperonin GroES, plays an essential role in assisting protein folding. The GroEL-GroES system forms a nano-cage that allows encapsulation of the non-native substrate proteins and provides a physical environment optimized to promote and accelerate protein folding. This chain is Chaperonin GroEL, found in Klebsiella pneumoniae (strain 342).